The primary structure comprises 306 residues: UDP-N-acetylenolpyruvoylglucosamine reductase (306 aa).

An FAD-binding PCMH-type domain is found at 34 to 198 (VGGPADLLIT…LEVTFKLHNS (165 aa)). The active site involves R177. S227 acts as the Proton donor in catalysis. The active site involves E297.

The protein belongs to the MurB family. The cofactor is FAD.

The protein resides in the cytoplasm. It carries out the reaction UDP-N-acetyl-alpha-D-muramate + NADP(+) = UDP-N-acetyl-3-O-(1-carboxyvinyl)-alpha-D-glucosamine + NADPH + H(+). Its pathway is cell wall biogenesis; peptidoglycan biosynthesis. In terms of biological role, cell wall formation. This is UDP-N-acetylenolpyruvoylglucosamine reductase from Clostridium botulinum (strain Langeland / NCTC 10281 / Type F).